Reading from the N-terminus, the 202-residue chain is B-cell CLL/lymphoma 7 protein family member B (202 aa).

The tract at residues 53 to 202 (DSKEKEKSKS…PAVPQTASES (150 aa)) is disordered. The span at 90 to 99 (ENSNQSSVSD) shows a compositional bias: polar residues. Positions 107 to 123 (SSTNSSPSPQQSESLSP) are enriched in low complexity. S114, S118, S120, S122, S127, S148, and S152 each carry phosphoserine.

It belongs to the BCL7 family.

Positive regulator of apoptosis. Plays a role in the Wnt signaling pathway, negatively regulating the expression of Wnt signaling components CTNNB1 and HMGA1. Involved in cell cycle progression, maintenance of the nuclear structure and stem cell differentiation. May play a role in lung tumor development or progression. The polypeptide is B-cell CLL/lymphoma 7 protein family member B (BCL7B) (Bos taurus (Bovine)).